The chain runs to 144 residues: Protein BUD31 homolog (144 aa).

The Nuclear localization signal signature appears at 2–10; it reads PKVRRSRKP.

Belongs to the BUD31 (G10) family.

It localises to the nucleus. This chain is Protein BUD31 homolog, found in Branchiostoma belcheri (Amphioxus).